A 368-amino-acid chain; its full sequence is 3-isopropylmalate dehydrogenase (368 aa).

79–92 (GPRYEGLPWDLRPE) lines the NAD(+) pocket. Substrate contacts are provided by Arg99, Arg109, Arg138, and Asp228. Positions 228, 252, and 256 each coordinate Mg(2+). Residue 292–304 (GSAPDIAGQDRAN) coordinates NAD(+).

This sequence belongs to the isocitrate and isopropylmalate dehydrogenases family. LeuB type 1 subfamily. As to quaternary structure, homodimer. It depends on Mg(2+) as a cofactor. Mn(2+) is required as a cofactor.

Its subcellular location is the cytoplasm. It catalyses the reaction (2R,3S)-3-isopropylmalate + NAD(+) = 4-methyl-2-oxopentanoate + CO2 + NADH. The protein operates within amino-acid biosynthesis; L-leucine biosynthesis; L-leucine from 3-methyl-2-oxobutanoate: step 3/4. Functionally, catalyzes the oxidation of 3-carboxy-2-hydroxy-4-methylpentanoate (3-isopropylmalate) to 3-carboxy-4-methyl-2-oxopentanoate. The product decarboxylates to 4-methyl-2 oxopentanoate. The chain is 3-isopropylmalate dehydrogenase from Symbiobacterium thermophilum (strain DSM 24528 / JCM 14929 / IAM 14863 / T).